The chain runs to 754 residues: Glutathione biosynthesis bifunctional protein GshAB (754 aa).

A glutamate--cysteine ligase region spans residues 1 to 333 (MHINQLLQHA…KAQKLNDKIA (333 aa)). One can recognise an ATP-grasp domain in the interval 489 to 752 (KKILRENGYP…LAKLFPEIST (264 aa)). 516-574 (SQIKNKPIVVKPKTTNFGLGISIFETAASHNDYEKALDIAFIEDYSVLVEEFIPGTEYR) contacts ATP. Mg(2+) contacts are provided by D696, E717, and N719. D696, E717, and N719 together coordinate Mn(2+).

This sequence in the N-terminal section; belongs to the glutamate--cysteine ligase type 1 family. Type 2 subfamily. In terms of assembly, monomer. Mg(2+) serves as cofactor. Mn(2+) is required as a cofactor.

It carries out the reaction L-cysteine + L-glutamate + ATP = gamma-L-glutamyl-L-cysteine + ADP + phosphate + H(+). The catalysed reaction is gamma-L-glutamyl-L-cysteine + glycine + ATP = glutathione + ADP + phosphate + H(+). It functions in the pathway sulfur metabolism; glutathione biosynthesis; glutathione from L-cysteine and L-glutamate: step 1/2. Its pathway is sulfur metabolism; glutathione biosynthesis; glutathione from L-cysteine and L-glutamate: step 2/2. In terms of biological role, synthesizes glutathione from L-glutamate and L-cysteine via gamma-L-glutamyl-L-cysteine. This is Glutathione biosynthesis bifunctional protein GshAB from Streptococcus mutans serotype c (strain ATCC 700610 / UA159).